A 316-amino-acid polypeptide reads, in one-letter code: 4-hydroxy-3-methylbut-2-enyl diphosphate reductase (316 aa).

Residue cysteine 18 participates in [4Fe-4S] cluster binding. (2E)-4-hydroxy-3-methylbut-2-enyl diphosphate-binding residues include histidine 47 and histidine 80. 2 residues coordinate dimethylallyl diphosphate: histidine 47 and histidine 80. Isopentenyl diphosphate contacts are provided by histidine 47 and histidine 80. Cysteine 102 contributes to the [4Fe-4S] cluster binding site. Histidine 130 lines the (2E)-4-hydroxy-3-methylbut-2-enyl diphosphate pocket. Histidine 130 contacts dimethylallyl diphosphate. Histidine 130 is an isopentenyl diphosphate binding site. Glutamate 132 serves as the catalytic Proton donor. Threonine 171 lines the (2E)-4-hydroxy-3-methylbut-2-enyl diphosphate pocket. A [4Fe-4S] cluster-binding site is contributed by cysteine 201. Positions 229, 230, 231, and 274 each coordinate (2E)-4-hydroxy-3-methylbut-2-enyl diphosphate. The dimethylallyl diphosphate site is built by serine 229, serine 230, asparagine 231, and serine 274. Serine 229, serine 230, asparagine 231, and serine 274 together coordinate isopentenyl diphosphate.

Belongs to the IspH family. The cofactor is [4Fe-4S] cluster.

The enzyme catalyses isopentenyl diphosphate + 2 oxidized [2Fe-2S]-[ferredoxin] + H2O = (2E)-4-hydroxy-3-methylbut-2-enyl diphosphate + 2 reduced [2Fe-2S]-[ferredoxin] + 2 H(+). The catalysed reaction is dimethylallyl diphosphate + 2 oxidized [2Fe-2S]-[ferredoxin] + H2O = (2E)-4-hydroxy-3-methylbut-2-enyl diphosphate + 2 reduced [2Fe-2S]-[ferredoxin] + 2 H(+). It functions in the pathway isoprenoid biosynthesis; dimethylallyl diphosphate biosynthesis; dimethylallyl diphosphate from (2E)-4-hydroxy-3-methylbutenyl diphosphate: step 1/1. It participates in isoprenoid biosynthesis; isopentenyl diphosphate biosynthesis via DXP pathway; isopentenyl diphosphate from 1-deoxy-D-xylulose 5-phosphate: step 6/6. Its function is as follows. Catalyzes the conversion of 1-hydroxy-2-methyl-2-(E)-butenyl 4-diphosphate (HMBPP) into a mixture of isopentenyl diphosphate (IPP) and dimethylallyl diphosphate (DMAPP). Acts in the terminal step of the DOXP/MEP pathway for isoprenoid precursor biosynthesis. The protein is 4-hydroxy-3-methylbut-2-enyl diphosphate reductase of Ruegeria sp. (strain TM1040) (Silicibacter sp.).